A 456-amino-acid polypeptide reads, in one-letter code: tRNA modification GTPase MnmE (456 aa).

Residues Arg-24, Glu-81, and Lys-120 each coordinate (6S)-5-formyl-5,6,7,8-tetrahydrofolate. The TrmE-type G domain occupies 216–379 (GMTVVIAGRP…LRDHLKACMG (164 aa)). Position 226 (Asn-226) interacts with K(+). GTP-binding positions include 226-231 (NAGKSS), 245-251 (TDIAGTT), 270-273 (DTAG), and 335-338 (NKAD). Mg(2+) is bound at residue Ser-230. 3 residues coordinate K(+): Thr-245, Ile-247, and Thr-250. Thr-251 is a Mg(2+) binding site. Lys-456 contacts (6S)-5-formyl-5,6,7,8-tetrahydrofolate.

This sequence belongs to the TRAFAC class TrmE-Era-EngA-EngB-Septin-like GTPase superfamily. TrmE GTPase family. As to quaternary structure, homodimer. Heterotetramer of two MnmE and two MnmG subunits. K(+) is required as a cofactor.

The protein localises to the cytoplasm. In terms of biological role, exhibits a very high intrinsic GTPase hydrolysis rate. Involved in the addition of a carboxymethylaminomethyl (cmnm) group at the wobble position (U34) of certain tRNAs, forming tRNA-cmnm(5)s(2)U34. The protein is tRNA modification GTPase MnmE of Pseudomonas fluorescens (strain ATCC BAA-477 / NRRL B-23932 / Pf-5).